The chain runs to 479 residues: ATP synthase subunit beta (479 aa).

153 to 160 (GGAGVGKT) lines the ATP pocket.

It belongs to the ATPase alpha/beta chains family. As to quaternary structure, F-type ATPases have 2 components, CF(1) - the catalytic core - and CF(0) - the membrane proton channel. CF(1) has five subunits: alpha(3), beta(3), gamma(1), delta(1), epsilon(1). CF(0) has three main subunits: a(1), b(2) and c(9-12). The alpha and beta chains form an alternating ring which encloses part of the gamma chain. CF(1) is attached to CF(0) by a central stalk formed by the gamma and epsilon chains, while a peripheral stalk is formed by the delta and b chains.

It is found in the cell membrane. The catalysed reaction is ATP + H2O + 4 H(+)(in) = ADP + phosphate + 5 H(+)(out). Produces ATP from ADP in the presence of a proton gradient across the membrane. The catalytic sites are hosted primarily by the beta subunits. The sequence is that of ATP synthase subunit beta from Lactobacillus helveticus (strain DPC 4571).